The primary structure comprises 700 residues: Methionine--tRNA ligase (700 aa).

A 'HIGH' region motif is present at residues 12 to 22; that stretch reads PYANGNFHIGH. Residues C143, C146, C156, and C159 each contribute to the Zn(2+) site. The short motif at 348-352 is the 'KMSKS' region element; sequence KMSKS. K351 is an ATP binding site. The tRNA-binding domain maps to 594-700; that stretch reads DFSKIDLRIA…AGAQPGMRVH (107 aa).

It belongs to the class-I aminoacyl-tRNA synthetase family. MetG type 1 subfamily. As to quaternary structure, homodimer. The cofactor is Zn(2+).

It is found in the cytoplasm. It catalyses the reaction tRNA(Met) + L-methionine + ATP = L-methionyl-tRNA(Met) + AMP + diphosphate. Functionally, is required not only for elongation of protein synthesis but also for the initiation of all mRNA translation through initiator tRNA(fMet) aminoacylation. The protein is Methionine--tRNA ligase of Albidiferax ferrireducens (strain ATCC BAA-621 / DSM 15236 / T118) (Rhodoferax ferrireducens).